Consider the following 333-residue polypeptide: Cinnamoyl-CoA reductase 1 (333 aa).

NADP(+) is bound by residues 13 to 19, Arg38, Lys44, 64 to 65, 84 to 86, Tyr157, Lys161, 184 to 187, and Ser199; these read GAGGFIA, DL, TAS, and PVLV. An intrachain disulfide couples Cys150 to Cys158. The Proton donor role is filled by Lys161.

This sequence belongs to the NAD(P)-dependent epimerase/dehydratase family. Dihydroflavonol-4-reductase subfamily. Post-translationally, the formation of a reversible disulfide bond reduces activity by perturbing the positioning of nearby catalytic residues. In terms of tissue distribution, expressed in flowers, leaves and stems.

It is found in the cytoplasm. It carries out the reaction (E)-coniferaldehyde + NADP(+) + CoA = (E)-feruloyl-CoA + NADPH + H(+). The catalysed reaction is (E)-4-coumaraldehyde + NADP(+) + CoA = (E)-4-coumaroyl-CoA + NADPH + H(+). It catalyses the reaction (E)-sinapaldehyde + NADP(+) + CoA = (E)-sinapoyl-CoA + NADPH + H(+). The enzyme catalyses (E)-cinnamaldehyde + NADP(+) + CoA = (E)-cinnamoyl-CoA + NADPH + H(+). The protein operates within aromatic compound metabolism; phenylpropanoid biosynthesis. Its activity is regulated as follows. Inhibited by sodium iodide-mediated oxidation. Functionally, involved in the latter stages of lignin biosynthesis. Catalyzes one of the last steps of monolignol biosynthesis, the conversion of cinnamoyl-CoAs into their corresponding cinnamaldehydes. Mediates the conversion of feruloyl CoA to coniferylaldehyde. Also active toward p-coumaroyl-CoA and sinapoyl-CoA. Involved in the production of floral volatile phenylpropanoids in flowers of fragrant cultivars (e.g. cv. Mitchell and cv. V26) from cinnamic acid, a common precursor with the anthocyanin biosynthesis pathway involved in flower pigmentation. The chain is Cinnamoyl-CoA reductase 1 from Petunia hybrida (Petunia).